We begin with the raw amino-acid sequence, 516 residues long: uncharacterized protein (516 aa).

S21 carries the phosphoserine modification. A disordered region spans residues 46 to 74 (DLQSSMEDSNKANGNGEETTDGAEGVLQT). Positions 47–62 (LQSSMEDSNKANGNGE) are enriched in polar residues. 6 WD repeats span residues 182 to 227 (TFPL…AVYP), 252 to 292 (YHTD…CVKS), 295 to 335 (YHSD…APSS), 337 to 377 (QVTS…KSVW), 381 to 421 (AHDG…PKMV), and 426 to 468 (LDVG…GVRK). The segment covering 482–493 (ERIVQLEDRGAG) has biased composition (basic and acidic residues). The tract at residues 482-516 (ERIVQLEDRGAGEDSSDDDDYEDIEDDDDQDAEMS) is disordered. The span at 495 to 516 (DSSDDDDYEDIEDDDDQDAEMS) shows a compositional bias: acidic residues. Phosphoserine occurs at positions 496 and 497.

Its subcellular location is the cytoplasm. It localises to the nucleus. The protein resides in the nucleolus. This is an uncharacterized protein from Schizosaccharomyces pombe (strain 972 / ATCC 24843) (Fission yeast).